Reading from the N-terminus, the 459-residue chain is MGSIVEPWAAIAENGNANVTAKGSSRELRHGRTAHNMSSSSLRKKSDLRLVQKVPCKTLKNILSNLQEVILGTKLTLLFLAIPLAILANSYNYGRPLIFGLSLIGLTPLAERVSFLTEQLAFYTGPTVGGLLNATCGNATELIIAILALANNKVAVVKYSLLGSILSNLLLVLGTSLFFGGIANIRREQRFDRKQADVNFFLLLMGLLCHLLPLLLKYAATGEVSTSMINKMSLTLSRTSSIVMLIAYIAYLIFQLWTHRQLFEAQQDDDDAYDDEVSVEETPVIGFWSGFAWLVGMTIVIALLSEYVVDTIEDASDSWGLSVSFISIILLPIVGNAAEHAGAIIFAFKNKLDISLGVALGSATQISLFVVPLSVIVAWILGIKMDLNFNILETSSLALAIIITAFTLQDGTSHYMKGLVLLLCYVIIAACFFVDQIPQPNDLDVGLQPMNNLGEVFSA.

The Cytoplasmic segment spans residues 1–67 (MGSIVEPWAA…TLKNILSNLQ (67 aa)). The chain crosses the membrane as a helical span at residues 68 to 88 (EVILGTKLTLLFLAIPLAILA). At 89-95 (NSYNYGR) the chain is on the extracellular side. A helical transmembrane segment spans residues 96-116 (PLIFGLSLIGLTPLAERVSFL). At 117 to 129 (TEQLAFYTGPTVG) the chain is on the cytoplasmic side. Residues 130–150 (GLLNATCGNATELIIAILALA) form a helical membrane-spanning segment. A cation selection region spans residues 137-172 (GNATELIIAILALANNKVAVVKYSLLGSILSNLLLV). The Extracellular portion of the chain corresponds to 151–161 (NNKVAVVKYSL). Residues 162–182 (LGSILSNLLLVLGTSLFFGGI) traverse the membrane as a helical segment. At 183-195 (ANIRREQRFDRKQ) the chain is on the cytoplasmic side. A helical membrane pass occupies residues 196–216 (ADVNFFLLLMGLLCHLLPLLL). The Extracellular portion of the chain corresponds to 217 to 238 (KYAATGEVSTSMINKMSLTLSR). Residues 239–259 (TSSIVMLIAYIAYLIFQLWTH) form a helical membrane-spanning segment. Residues 260 to 283 (RQLFEAQQDDDDAYDDEVSVEETP) are Cytoplasmic-facing. Residues 284–304 (VIGFWSGFAWLVGMTIVIALL) traverse the membrane as a helical segment. Residues 305–327 (SEYVVDTIEDASDSWGLSVSFIS) are Extracellular-facing. A helical transmembrane segment spans residues 328 to 348 (IILLPIVGNAAEHAGAIIFAF). The tract at residues 335 to 370 (GNAAEHAGAIIFAFKNKLDISLGVALGSATQISLFV) is cation selection. At 349-362 (KNKLDISLGVALGS) the chain is on the cytoplasmic side. Residues 363 to 383 (ATQISLFVVPLSVIVAWILGI) form a helical membrane-spanning segment. The Extracellular segment spans residues 384-386 (KMD). A helical membrane pass occupies residues 387–407 (LNFNILETSSLALAIIITAFT). Residues 408–417 (LQDGTSHYMK) lie on the Cytoplasmic side of the membrane. Residues 418 to 438 (GLVLLLCYVIIAACFFVDQIP) form a helical membrane-spanning segment. Residues 439–459 (QPNDLDVGLQPMNNLGEVFSA) are Extracellular-facing.

It belongs to the Ca(2+):cation antiporter (CaCA) (TC 2.A.19) family. Cation/proton exchanger (CAX) subfamily. In terms of tissue distribution, expressed in roots, stems and flowers.

It is found in the vacuole membrane. Its activity is regulated as follows. Inhibited by excess of Ca(2+). Its function is as follows. Vacuolar cation/proton exchanger (CAX). Translocates Ca(2+) and other metal ions into vacuoles using the proton gradient formed by H(+)-ATPase and H(+)-pyrophosphatase. Involved in ion homeostasis in association with CAX1. The sequence is that of Vacuolar cation/proton exchanger 3 (CAX3) from Arabidopsis thaliana (Mouse-ear cress).